We begin with the raw amino-acid sequence, 65 residues long: Large ribosomal subunit protein bL35 (65 aa).

It belongs to the bacterial ribosomal protein bL35 family.

This Methylobacillus flagellatus (strain ATCC 51484 / DSM 6875 / VKM B-1610 / KT) protein is Large ribosomal subunit protein bL35.